A 338-amino-acid polypeptide reads, in one-letter code: L-serine dehydratase (338 aa).

The residue at position 39 (Lys39) is an N6-(pyridoxal phosphate)lysine.

It belongs to the serine/threonine dehydratase family. It depends on pyridoxal 5'-phosphate as a cofactor.

It is found in the cytoplasm. The enzyme catalyses L-serine = pyruvate + NH4(+). Its pathway is carbohydrate biosynthesis; gluconeogenesis. The chain is L-serine dehydratase (SDL1) from Saccharomyces cerevisiae (strain YJM789) (Baker's yeast).